The primary structure comprises 85 residues: Granaticin polyketide synthase acyl carrier protein (85 aa).

A Carrier domain is found at 3-81 (RLTLDGLRTI…VLLDLVNGAQ (79 aa)). Serine 41 carries the O-(pantetheine 4'-phosphoryl)serine modification.

Post-translationally, 4'-phosphopantetheine is transferred from CoA to a specific serine of the apo-ACP-like protein.

Its pathway is antibiotic biosynthesis; granaticin biosynthesis. Functionally, acyl carrier protein. The sequence is that of Granaticin polyketide synthase acyl carrier protein from Streptomyces violaceoruber.